Here is an 847-residue protein sequence, read N- to C-terminus: B-cell receptor CD22 (847 aa).

Positions 1–19 (MHLLGPWLLLLVLEYLAFS) are cleaved as a signal peptide. In terms of domain architecture, Ig-like V-type spans 20 to 138 (DSSKWVFEHP…MERIHLNVSE (119 aa)). Topologically, residues 20 to 687 (DSSKWVFEHP…YYSPETIGRR (668 aa)) are extracellular. Cystine bridges form between cysteine 39-cysteine 167, cysteine 44-cysteine 102, and cysteine 161-cysteine 219. Asparagine 67, asparagine 101, and asparagine 112 each carry an N-linked (GlcNAc...) asparagine glycan. Position 120 (arginine 120) interacts with N-acetylneuraminate. 3 N-linked (GlcNAc...) asparagine glycosylation sites follow: asparagine 135, asparagine 164, and asparagine 231. 6 Ig-like C2-type domains span residues 143–235 (PHIQ…DTVQ), 242–326 (PKLE…VFLQ), 331–416 (PEPS…LDVQ), 419–500 (PKKV…VALN), 505–582 (PRDV…QTAS), and 593–676 (PRRL…STLT). 4 disulfide bridges follow: cysteine 265–cysteine 309, cysteine 353–cysteine 396, cysteine 442–cysteine 484, and cysteine 529–cysteine 571. 3 N-linked (GlcNAc...) asparagine glycosylation sites follow: asparagine 363, asparagine 445, and asparagine 479. 2 N-linked (GlcNAc...) asparagine glycosylation sites follow: asparagine 574 and asparagine 634. Cysteines 616 and 659 form a disulfide. A helical membrane pass occupies residues 688–706 (VAVGLGSCLAILILAICGL). The Cytoplasmic portion of the chain corresponds to 707–847 (KLQRRWKRTQ…ENVDYVILKH (141 aa)). Residues serine 725, serine 726, and serine 729 each carry the phosphoserine modification. Short sequence motifs (ITIM motif) lie at residues 760–765 (ISYTTL) and 794–799 (VTYSAL). Tyrosine 762 carries the phosphotyrosine modification. Tyrosine 807, tyrosine 822, and tyrosine 842 each carry phosphotyrosine. 2 short sequence motifs (ITIM motif) span residues 820 to 825 (IHYSEL) and 840 to 845 (VDYVIL).

Belongs to the immunoglobulin superfamily. SIGLEC (sialic acid binding Ig-like lectin) family. Predominantly monomer of isoform CD22-beta. Also found as heterodimer of isoform CD22-beta and a shorter isoform. Interacts with PTPN6/SHP-1, LYN, SYK, PIK3R1/PIK3R2 and PLCG1 upon phosphorylation. Interacts with GRB2, INPP5D and SHC1 upon phosphorylation. May form a complex with INPP5D/SHIP, GRB2 and SHC1. In terms of processing, phosphorylation of Tyr-762, Tyr-807 and Tyr-822 are involved in binding to SYK, GRB2 and SYK, respectively. Phosphorylation of Tyr-842 is involved in binding to SYK, PLCG2 and PIK3R1/PIK3R2. Post-translationally, phosphorylated on tyrosine residues by LYN. B-lymphocytes.

The protein resides in the cell membrane. Most highly expressed siglec (sialic acid-binding immunoglobulin-like lectin) on B-cells that plays a role in various aspects of B-cell biology including differentiation, antigen presentation, and trafficking to bone marrow. Binds to alpha 2,6-linked sialic acid residues of surface molecules such as CD22 itself, CD45 and IgM in a cis configuration. Can also bind to ligands on other cells as an adhesion molecule in a trans configuration. Acts as an inhibitory coreceptor on the surface of B-cells and inhibits B-cell receptor induced signaling, characterized by inhibition of the calcium mobilization and cellular activation. Mechanistically, the immunoreceptor tyrosine-based inhibitory motif domain is phosphorylated by the Src kinase LYN, which in turn leads to the recruitment of the protein tyrosine phosphatase 1/PTPN6, leading to the negative regulation of BCR signaling. If this negative signaling from is of sufficient strength, apoptosis of the B-cell can be induced. The polypeptide is B-cell receptor CD22 (Homo sapiens (Human)).